We begin with the raw amino-acid sequence, 574 residues long: 5'-nucleotidase (574 aa).

The signal sequence occupies residues 1–26 (MNPGAARTPALRILALGALLWPAARP). The Zn(2+) site is built by Asp-36 and His-38. Cysteines 51 and 57 form a disulfide. N-linked (GlcNAc...) asparagine glycosylation is present at Asn-53. Zn(2+) is bound by residues Asp-85, Asn-117, His-220, and His-243. Asn-311 and Asn-333 each carry an N-linked (GlcNAc...) asparagine glycan. Cystine bridges form between Cys-353/Cys-358 and Cys-365/Cys-387. Arg-354 contributes to the AMP binding site. Residue Arg-354 coordinates IMP. Positions 390 and 395 each coordinate AMP. Positions 390 and 395 each coordinate IMP. A glycan (N-linked (GlcNAc...) asparagine) is linked at Asn-403. Phe-417 lines the AMP pocket. Phe-417 contacts IMP. Residues Cys-476 and Cys-479 are joined by a disulfide bond. Residues Phe-500 and Asp-506 each contribute to the AMP site. The IMP site is built by Phe-500 and Asp-506. The GPI-anchor amidated serine moiety is linked to residue Ser-549. A propeptide spans 550-574 (AGSHCCGSFSLIFLSVLAVIIILYQ) (removed in mature form).

This sequence belongs to the 5'-nucleotidase family. Homodimer. It depends on Zn(2+) as a cofactor.

The protein localises to the cell membrane. It carries out the reaction a ribonucleoside 5'-phosphate + H2O = a ribonucleoside + phosphate. The enzyme catalyses a 2'-deoxyribonucleoside 5'-phosphate + H2O = a 2'-deoxyribonucleoside + phosphate. The catalysed reaction is dTMP + H2O = thymidine + phosphate. It catalyses the reaction CMP + H2O = cytidine + phosphate. It carries out the reaction IMP + H2O = inosine + phosphate. The enzyme catalyses AMP + H2O = adenosine + phosphate. The catalysed reaction is GMP + H2O = guanosine + phosphate. It catalyses the reaction UMP + H2O = uridine + phosphate. It carries out the reaction dAMP + H2O = 2'-deoxyadenosine + phosphate. The enzyme catalyses dCMP + H2O = 2'-deoxycytidine + phosphate. Functionally, catalyzes the hydrolysis of nucleotide monophosphates, releasing inorganic phosphate and the corresponding nucleoside, with AMP being the preferred substrate. Shows a preference for ribonucleotide monophosphates over their equivalent deoxyribose forms. Other substrates include IMP, UMP, GMP, CMP, dAMP, dCMP, dTMP, NAD and NMN. The polypeptide is 5'-nucleotidase (NT5E) (Bos taurus (Bovine)).